We begin with the raw amino-acid sequence, 515 residues long: Maturase K (515 aa).

The protein belongs to the intron maturase 2 family. MatK subfamily.

The protein localises to the plastid. It localises to the chloroplast. In terms of biological role, usually encoded in the trnK tRNA gene intron. Probably assists in splicing its own and other chloroplast group II introns. The protein is Maturase K of Pinus banksiana (Jack pine).